Reading from the N-terminus, the 728-residue chain is Fatty acid oxidation complex subunit alpha (728 aa).

The interval 1–189 is enoyl-CoA hydratase/isomerase; it reads MLYQSETIQV…KNGLIDAVVP (189 aa). Residue Asp296 participates in substrate binding. The 3-hydroxyacyl-CoA dehydrogenase stretch occupies residues 311 to 728; the sequence is TIPEYAAVLG…TIAVSTGKTA (418 aa). NAD(+)-binding positions include Met324, Asp343, 400–402, Lys407, and Ser429; that span reads VVE. His450 acts as the For 3-hydroxyacyl-CoA dehydrogenase activity in catalysis. Asn453 is an NAD(+) binding site. Substrate is bound by residues Asn500 and Tyr660.

In the N-terminal section; belongs to the enoyl-CoA hydratase/isomerase family. This sequence in the C-terminal section; belongs to the 3-hydroxyacyl-CoA dehydrogenase family. In terms of assembly, heterotetramer of two alpha chains (FadB) and two beta chains (FadA).

It catalyses the reaction a (3S)-3-hydroxyacyl-CoA + NAD(+) = a 3-oxoacyl-CoA + NADH + H(+). The enzyme catalyses a (3S)-3-hydroxyacyl-CoA = a (2E)-enoyl-CoA + H2O. The catalysed reaction is a 4-saturated-(3S)-3-hydroxyacyl-CoA = a (3E)-enoyl-CoA + H2O. It carries out the reaction (3S)-3-hydroxybutanoyl-CoA = (3R)-3-hydroxybutanoyl-CoA. It catalyses the reaction a (3Z)-enoyl-CoA = a 4-saturated (2E)-enoyl-CoA. The enzyme catalyses a (3E)-enoyl-CoA = a 4-saturated (2E)-enoyl-CoA. It participates in lipid metabolism; fatty acid beta-oxidation. Its function is as follows. Involved in the aerobic and anaerobic degradation of long-chain fatty acids via beta-oxidation cycle. Catalyzes the formation of 3-oxoacyl-CoA from enoyl-CoA via L-3-hydroxyacyl-CoA. It can also use D-3-hydroxyacyl-CoA and cis-3-enoyl-CoA as substrate. The protein is Fatty acid oxidation complex subunit alpha of Photorhabdus laumondii subsp. laumondii (strain DSM 15139 / CIP 105565 / TT01) (Photorhabdus luminescens subsp. laumondii).